Reading from the N-terminus, the 260-residue chain is MNIEALKVFKESGEKITCLTAYDASFASVFDACGIDIILVGDSLGNVIQGDKNTLDVSMSDMIYHMQAVAKGTQNALRIADMPYQSYTYAEQTLTNAKRLIMAGAQMVKLEGGCEHEASFRILQGNDISVCGHLGLQPQSVVEIDGYRVQGRGKQGANKIIKNALALASWGVKVIVLECVPAELAKQVSQSVSIPIIGIGAGLDCDGQVLVSYDMLGVHVRHVPRFVKNFLTDNGDVKSAVNAFIKAVKDKSFPSKKYSY.

2 residues coordinate Mg(2+): Asp-42 and Asp-81. 3-methyl-2-oxobutanoate contacts are provided by residues 42–43, Asp-81, and Lys-109; that span reads DS. Glu-111 is a binding site for Mg(2+). The active-site Proton acceptor is Glu-178.

It belongs to the PanB family. Homodecamer; pentamer of dimers. Mg(2+) serves as cofactor.

It is found in the cytoplasm. The enzyme catalyses 3-methyl-2-oxobutanoate + (6R)-5,10-methylene-5,6,7,8-tetrahydrofolate + H2O = 2-dehydropantoate + (6S)-5,6,7,8-tetrahydrofolate. It functions in the pathway cofactor biosynthesis; (R)-pantothenate biosynthesis; (R)-pantoate from 3-methyl-2-oxobutanoate: step 1/2. Its function is as follows. Catalyzes the reversible reaction in which hydroxymethyl group from 5,10-methylenetetrahydrofolate is transferred onto alpha-ketoisovalerate to form ketopantoate. The sequence is that of 3-methyl-2-oxobutanoate hydroxymethyltransferase from Vesicomyosocius okutanii subsp. Calyptogena okutanii (strain HA).